A 606-amino-acid chain; its full sequence is Lysosomal cobalamin transporter ABCD4 (606 aa).

In terms of domain architecture, ABC transmembrane type-1 spans 39–332 (NVLMFMTLLC…CFTQLIDLST (294 aa)). 5 helical membrane passes run 43–63 (FMTLLCVTLLEQLVIYQVGLI), 76–96 (LDGFKALTLLAVTLIVLNSTL), 190–210 (IFGYFIVGTMVNKTLMGPIVT), 279–299 (YLGSILSYVVIAIPIFSGVYG), and 314–334 (AFVCIYLISCFTQLIDLSTTL). One can recognise an ABC transporter domain in the interval 389-603 (LDRVSILAPS…GGGSWELTRI (215 aa)). An ATP-binding site is contributed by 421–428 (GNTGTGKT).

This sequence belongs to the ABC transporter superfamily. ABCD family. Peroxisomal fatty acyl CoA transporter (TC 3.A.1.203) subfamily. As to quaternary structure, homodimer or heterodimer. Interacts with LMBRD1; this interaction induces the translocation of ABCD4 from the ER to the lysosome membrane. Interacts with LMBRD1 and MMACHC; this interaction ensures the transport of cobalamin from the lysosome to the cytosol.

The protein resides in the endoplasmic reticulum membrane. The protein localises to the lysosome membrane. The catalysed reaction is an R-cob(III)alamin(out) + ATP + H2O = an R-cob(III)alamin(in) + ADP + phosphate + H(+). Functionally, lysosomal membrane protein that transports cobalamin (Vitamin B12) from the lysosomal lumen to the cytosol in an ATP-dependent manner. Targeted by LMBRD1 lysosomal chaperone from the endoplasmic reticulum to the lysosomal membrane. Then forms a complex with lysosomal chaperone LMBRD1 and cytosolic MMACHC to transport cobalamin across the lysosomal membrane. In Mus musculus (Mouse), this protein is Lysosomal cobalamin transporter ABCD4.